The primary structure comprises 87 residues: UPF0386 protein RSKD131_0371 (87 aa).

The protein belongs to the UPF0386 family.

This Cereibacter sphaeroides (strain KD131 / KCTC 12085) (Rhodobacter sphaeroides) protein is UPF0386 protein RSKD131_0371.